A 62-amino-acid chain; its full sequence is UPF0337 protein gsr0040 (62 aa).

Basic and acidic residues-rich tracts occupy residues 1-15 (MGID…KDVQ) and 27-62 (DDPK…IDNV). The tract at residues 1–62 (MGIDKRAEAT…DQAHRTIDNV (62 aa)) is disordered.

The protein belongs to the UPF0337 (CsbD) family.

In Gloeobacter violaceus (strain ATCC 29082 / PCC 7421), this protein is UPF0337 protein gsr0040.